The sequence spans 310 residues: tRNA dimethylallyltransferase (310 aa).

Residue 14–21 (GPTASGKS) coordinates ATP. Residue 16 to 21 (TASGKS) coordinates substrate. Interaction with substrate tRNA regions lie at residues 39-42 (DSMQ) and 163-167 (QRIVR).

This sequence belongs to the IPP transferase family. Monomer. It depends on Mg(2+) as a cofactor.

It catalyses the reaction adenosine(37) in tRNA + dimethylallyl diphosphate = N(6)-dimethylallyladenosine(37) in tRNA + diphosphate. Functionally, catalyzes the transfer of a dimethylallyl group onto the adenine at position 37 in tRNAs that read codons beginning with uridine, leading to the formation of N6-(dimethylallyl)adenosine (i(6)A). The polypeptide is tRNA dimethylallyltransferase (Brucella suis biovar 1 (strain 1330)).